Here is a 142-residue protein sequence, read N- to C-terminus: Small ribosomal subunit protein uS19 (142 aa).

The residue at position 2 (Ser2) is an N-acetylserine. Glycyl lysine isopeptide (Lys-Gly) (interchain with G-Cter in ubiquitin) cross-links involve residues Lys24, Lys35, and Lys64.

The protein belongs to the universal ribosomal protein uS19 family. In terms of assembly, component of the small ribosomal subunit (SSU). Mature yeast ribosomes consist of a small (40S) and a large (60S) subunit. The 40S small subunit contains 1 molecule of ribosomal RNA (18S rRNA) and 33 different proteins (encoded by 57 genes). The large 60S subunit contains 3 rRNA molecules (25S, 5.8S and 5S rRNA) and 46 different proteins (encoded by 81 genes).

The protein localises to the cytoplasm. Functionally, component of the ribosome, a large ribonucleoprotein complex responsible for the synthesis of proteins in the cell. The small ribosomal subunit (SSU) binds messenger RNAs (mRNAs) and translates the encoded message by selecting cognate aminoacyl-transfer RNA (tRNA) molecules. The large subunit (LSU) contains the ribosomal catalytic site termed the peptidyl transferase center (PTC), which catalyzes the formation of peptide bonds, thereby polymerizing the amino acids delivered by tRNAs into a polypeptide chain. The nascent polypeptides leave the ribosome through a tunnel in the LSU and interact with protein factors that function in enzymatic processing, targeting, and the membrane insertion of nascent chains at the exit of the ribosomal tunnel. uS19 is involved in the nuclear export of the small ribosomal subunit precursor. Has a role in the late stage of the assembly of pre-40S particles within the nucleus and controls their export to the cytoplasm. This Saccharomyces cerevisiae (strain ATCC 204508 / S288c) (Baker's yeast) protein is Small ribosomal subunit protein uS19.